The chain runs to 811 residues: E3 ubiquitin-protein ligase RNF10 (811 aa).

Residues 1 to 10 (MPLSSPNAAA) show a composition bias toward polar residues. Residues 1-119 (MPLSSPNAAA…SFNGGRRDEV (119 aa)) form a disordered region. At Ser5 the chain carries Phosphoserine. Composition is skewed to low complexity over residues 18–31 (NSGS…SGSS), 78–90 (NNQS…QKSK), and 104–113 (SKLFSSSFNG). The interaction with MEOX2 stretch occupies residues 101–185 (GGSSKLFSSS…FNKELFLQAN (85 aa)). Phosphoserine is present on residues Ser110 and Ser128. The segment at 225–267 (CPICLYPPTAAKITRCGHIFCWACILHYLSLSEKTWSKCPICY) adopts an RING-type zinc-finger fold. The segment covering 653–662 (DSALGPTSTE) has biased composition (polar residues). Disordered stretches follow at residues 653–672 (DSAL…ISPL), 724–761 (DVWP…VPSF), and 776–811 (LDTP…VHTK). Positions 724 to 736 (DVWPKTAPKKDEN) are enriched in basic and acidic residues. Polar residues predominate over residues 802-811 (LFSTSVVHTK).

It belongs to the RNF10 family. In terms of assembly, interacts with MEOX2.

The protein resides in the cytoplasm. Its subcellular location is the nucleus. It carries out the reaction S-ubiquitinyl-[E2 ubiquitin-conjugating enzyme]-L-cysteine + [acceptor protein]-L-lysine = [E2 ubiquitin-conjugating enzyme]-L-cysteine + N(6)-ubiquitinyl-[acceptor protein]-L-lysine.. The protein operates within protein modification; protein ubiquitination. In terms of biological role, E3 ubiquitin-protein ligase that catalyzes monoubiquitination of 40S ribosomal proteins RPS2/us5 and RPS3/us3 in response to ribosome stalling. Part of a ribosome quality control that takes place when ribosomes have stalled during translation initiation (iRQC): RNF10 acts by mediating monoubiquitination of RPS2/us5 and RPS3/us3, promoting their degradation by the proteasome. Also promotes ubiquitination of 40S ribosomal proteins in response to ribosome stalling during translation elongation. The action of RNF10 in iRQC is counteracted by USP10. May also act as a transcriptional factor involved in the regulation of MAG (Myelin-associated glycoprotein) expression. Acts as a regulator of Schwann cell differentiation and myelination. The chain is E3 ubiquitin-protein ligase RNF10 from Homo sapiens (Human).